The following is a 105-amino-acid chain: Circadian clock oscillator protein KaiB (105 aa).

Belongs to the KaiB family. The KaiABC complex composition changes during the circadian cycle to control KaiC phosphorylation. Complexes KaiC(6), KaiA(2-4):KaiC(6), KaiB(6):KaiC(6) and KaiC(6):KaiB(6):KaiA(12) are among the most important forms, many form cooperatively. Undergoes a major conformational rearrangment; in the free state forms homotetramers as a dimer of dimers. When bound to the CI domain of KaiC switches to a monomeric thioredoxin-fold (KaiB(fs)). KaiB(fs) binds CikA, leading it to dephosphorylate phospho-RpaA.

Its function is as follows. Key component of the KaiABC oscillator complex, which constitutes the main circadian regulator in cyanobacteria. Complex composition changes during the circadian cycle to control KaiC phosphorylation. KaiA stimulates KaiC autophosphorylation, while KaiB sequesters KaiA, leading to KaiC autodephosphorylation. Phospho-Ser-431 KaiC accumulation triggers binding of KaiB to form the KaiB(6):KaiC(6) complex, leading to changes in output regulators CikA and SasA. KaiB switches to a thioredoxin-like fold (KaiB(fs)) when bound to KaiC. KaiB(6):KaiC(6) formation exposes a site for KaiA binding that sequesters KaiA from KaiC, making the KaiC(6):KaiB(6):KaiA(12) complex that results in KaiC autodephosphorylation. In terms of biological role, a metamorphic protein which reversibly switches between an inactive tetrameric fold and a rare, thioredoxin-like monomeric fold (KaiB(fs)). KaiB(fs) binds phospho-KaiC, KaiA and CikA. KaiA and CikA compete for binding to KaiB(fs), and KaiB(fs) and SasA compete for binding to KaiC, thus the clock oscillator and output signal pathway are tightly coupled. The sequence is that of Circadian clock oscillator protein KaiB from Cyanothece sp. (strain PCC 7425 / ATCC 29141).